The sequence spans 315 residues: tRNA dimethylallyltransferase (315 aa).

13-20 provides a ligand contact to ATP; the sequence is GPTASGKT. Position 15–20 (15–20) interacts with substrate; the sequence is TASGKT. Interaction with substrate tRNA regions lie at residues 38–41, 162–166, 243–248, and 276–283; these read DSAL, QRLSR, RCVGYR, and KRQITWLR.

It belongs to the IPP transferase family. Monomer. Mg(2+) is required as a cofactor.

It catalyses the reaction adenosine(37) in tRNA + dimethylallyl diphosphate = N(6)-dimethylallyladenosine(37) in tRNA + diphosphate. Its function is as follows. Catalyzes the transfer of a dimethylallyl group onto the adenine at position 37 in tRNAs that read codons beginning with uridine, leading to the formation of N6-(dimethylallyl)adenosine (i(6)A). The sequence is that of tRNA dimethylallyltransferase from Vibrio vulnificus (strain YJ016).